The following is a 520-amino-acid chain: GMP synthase [glutamine-hydrolyzing] (520 aa).

The region spanning 9–202 (TILIIDFGSQ…VHRIVGVKPG (194 aa)) is the Glutamine amidotransferase type-1 domain. The active-site Nucleophile is Cys86. Catalysis depends on residues His176 and Glu178. The region spanning 203-395 (WTMGAYREQA…LGLPDSFIGR (193 aa)) is the GMPS ATP-PPase domain. Residue 230 to 236 (SGGVDSS) participates in ATP binding.

In terms of assembly, homodimer.

The catalysed reaction is XMP + L-glutamine + ATP + H2O = GMP + L-glutamate + AMP + diphosphate + 2 H(+). The protein operates within purine metabolism; GMP biosynthesis; GMP from XMP (L-Gln route): step 1/1. Its function is as follows. Catalyzes the synthesis of GMP from XMP. In Brucella canis (strain ATCC 23365 / NCTC 10854 / RM-666), this protein is GMP synthase [glutamine-hydrolyzing].